A 72-amino-acid polypeptide reads, in one-letter code: Translation initiation factor IF-1 (72 aa).

Residues 1–72 (MAKEDTLEFP…TKGRINYRFK (72 aa)) form the S1-like domain.

This sequence belongs to the IF-1 family. Component of the 30S ribosomal translation pre-initiation complex which assembles on the 30S ribosome in the order IF-2 and IF-3, IF-1 and N-formylmethionyl-tRNA(fMet); mRNA recruitment can occur at any time during PIC assembly.

Its subcellular location is the cytoplasm. In terms of biological role, one of the essential components for the initiation of protein synthesis. Stabilizes the binding of IF-2 and IF-3 on the 30S subunit to which N-formylmethionyl-tRNA(fMet) subsequently binds. Helps modulate mRNA selection, yielding the 30S pre-initiation complex (PIC). Upon addition of the 50S ribosomal subunit IF-1, IF-2 and IF-3 are released leaving the mature 70S translation initiation complex. In Ruegeria sp. (strain TM1040) (Silicibacter sp.), this protein is Translation initiation factor IF-1.